The following is a 475-amino-acid chain: MKYELVVGLEVHCQLNTASKAFCSCSAQFGKPANSNVCPVCLALPGALPVLNRRVVEDAVKLGLATGCAIAPHSVLARKNYFYPDLPKGYQISQFEEPICIEGHLMVDAGEGEKLIRLIRIHIEEDAGKSIHDIGDDTYIDVNRCGVPLLEIVSYPDIRTAKEASTYLQKLRQIVKYLGISDGNMEEGSLRCDANVSLRPVGDEEYGTRTEIKNMNSFKNVEKAIEFEAERHRGILEEGGTIVQETRLWDADKGETRSMRGKEFAHDYRYFPDPDLVPVLVDDEMLRRIRLELPEFPEARASRFVEQYGIPVYDAAVLTVEREMADYFEAVVEVAGDGKVSSNWVMGEVMRTLKEKYLDITAFSVAPSRLGGLIKLIGSGAISNTIAKQVFELMQQSEASAEEIVQREGLAQVSDTGEIERVVDEILAANPDQLAGYREGKVKLFGFFVGQCMARMKGKANPKVVNEVLQRKLEG.

Belongs to the GatB/GatE family. GatB subfamily. As to quaternary structure, heterotrimer of A, B and C subunits.

It carries out the reaction L-glutamyl-tRNA(Gln) + L-glutamine + ATP + H2O = L-glutaminyl-tRNA(Gln) + L-glutamate + ADP + phosphate + H(+). The catalysed reaction is L-aspartyl-tRNA(Asn) + L-glutamine + ATP + H2O = L-asparaginyl-tRNA(Asn) + L-glutamate + ADP + phosphate + 2 H(+). Allows the formation of correctly charged Asn-tRNA(Asn) or Gln-tRNA(Gln) through the transamidation of misacylated Asp-tRNA(Asn) or Glu-tRNA(Gln) in organisms which lack either or both of asparaginyl-tRNA or glutaminyl-tRNA synthetases. The reaction takes place in the presence of glutamine and ATP through an activated phospho-Asp-tRNA(Asn) or phospho-Glu-tRNA(Gln). The protein is Aspartyl/glutamyl-tRNA(Asn/Gln) amidotransferase subunit B of Chlorobium luteolum (strain DSM 273 / BCRC 81028 / 2530) (Pelodictyon luteolum).